The sequence spans 701 residues: Transcription factor PDR8 (701 aa).

Residues 1–22 (MDGSHFPMKSTTGEPVSSGKKG) are disordered. The segment at residues 31–59 (CAFCRKRKLKCSQARPMCQQCVIRKLPQC) is a DNA-binding region (zn(2)-C6 fungal-type).

It is found in the cytoplasm. The protein resides in the nucleus. Functionally, up-regulates the transcription of the genes for ATP-binding cassette (ABC) transporters YOR1 and PDR15, for major facilitator superfamily transporter AZR1, for pleiotropic drug resistance SNG1, for alpha-glucosidase YJL216C and for YLL056C. The sequence is that of Transcription factor PDR8 (PDR8) from Saccharomyces cerevisiae (strain ATCC 204508 / S288c) (Baker's yeast).